A 136-amino-acid chain; its full sequence is Small ribosomal subunit protein uS12 (136 aa).

Asp-89 carries the post-translational modification 3-methylthioaspartic acid. A disordered region spans residues 101-136; it reads SLDTSGVADRKQSRSKYGAKQPKAGVPAPVKGKGKR.

This sequence belongs to the universal ribosomal protein uS12 family. Part of the 30S ribosomal subunit. Contacts proteins S8 and S17. May interact with IF1 in the 30S initiation complex.

In terms of biological role, with S4 and S5 plays an important role in translational accuracy. Its function is as follows. Interacts with and stabilizes bases of the 16S rRNA that are involved in tRNA selection in the A site and with the mRNA backbone. Located at the interface of the 30S and 50S subunits, it traverses the body of the 30S subunit contacting proteins on the other side and probably holding the rRNA structure together. The combined cluster of proteins S8, S12 and S17 appears to hold together the shoulder and platform of the 30S subunit. The protein is Small ribosomal subunit protein uS12 of Pelodictyon phaeoclathratiforme (strain DSM 5477 / BU-1).